Here is a 467-residue protein sequence, read N- to C-terminus: Bifunctional protein GlmU (467 aa).

Residues 1–229 (MEKNTIILAA…FSESMGVNDR (229 aa)) form a pyrophosphorylase region. UDP-N-acetyl-alpha-D-glucosamine contacts are provided by residues 8–11 (LAAG), lysine 22, glutamine 72, 77–78 (GT), 100–102 (SGD), glycine 139, glutamate 154, asparagine 169, and asparagine 227. A Mg(2+)-binding site is contributed by aspartate 102. Mg(2+) is bound at residue asparagine 227. The segment at 230-250 (LALSKATKVMQRRINEEHMVN) is linker. The segment at 251 to 467 (GVTIIDPENT…ALKAEEENNK (217 aa)) is N-acetyltransferase. UDP-N-acetyl-alpha-D-glucosamine-binding residues include arginine 332 and lysine 350. Catalysis depends on histidine 362, which acts as the Proton acceptor. Tyrosine 365 and asparagine 376 together coordinate UDP-N-acetyl-alpha-D-glucosamine. Acetyl-CoA is bound by residues 385–386 (NY), serine 404, alanine 422, and arginine 439.

This sequence in the N-terminal section; belongs to the N-acetylglucosamine-1-phosphate uridyltransferase family. The protein in the C-terminal section; belongs to the transferase hexapeptide repeat family. In terms of assembly, homotrimer. It depends on Mg(2+) as a cofactor.

It localises to the cytoplasm. The enzyme catalyses alpha-D-glucosamine 1-phosphate + acetyl-CoA = N-acetyl-alpha-D-glucosamine 1-phosphate + CoA + H(+). The catalysed reaction is N-acetyl-alpha-D-glucosamine 1-phosphate + UTP + H(+) = UDP-N-acetyl-alpha-D-glucosamine + diphosphate. Its pathway is nucleotide-sugar biosynthesis; UDP-N-acetyl-alpha-D-glucosamine biosynthesis; N-acetyl-alpha-D-glucosamine 1-phosphate from alpha-D-glucosamine 6-phosphate (route II): step 2/2. It participates in nucleotide-sugar biosynthesis; UDP-N-acetyl-alpha-D-glucosamine biosynthesis; UDP-N-acetyl-alpha-D-glucosamine from N-acetyl-alpha-D-glucosamine 1-phosphate: step 1/1. It functions in the pathway bacterial outer membrane biogenesis; LPS lipid A biosynthesis. Catalyzes the last two sequential reactions in the de novo biosynthetic pathway for UDP-N-acetylglucosamine (UDP-GlcNAc). The C-terminal domain catalyzes the transfer of acetyl group from acetyl coenzyme A to glucosamine-1-phosphate (GlcN-1-P) to produce N-acetylglucosamine-1-phosphate (GlcNAc-1-P), which is converted into UDP-GlcNAc by the transfer of uridine 5-monophosphate (from uridine 5-triphosphate), a reaction catalyzed by the N-terminal domain. The sequence is that of Bifunctional protein GlmU from Pediococcus pentosaceus (strain ATCC 25745 / CCUG 21536 / LMG 10740 / 183-1w).